The chain runs to 692 residues: Elongation factor G (692 aa).

Residues 8-283 (NRIRNIGIAA…AVIDYLPAPT (276 aa)) enclose the tr-type G domain. GTP contacts are provided by residues 17-24 (AHIDAGKT), 81-85 (DTPGH), and 135-138 (NKMD).

Belongs to the TRAFAC class translation factor GTPase superfamily. Classic translation factor GTPase family. EF-G/EF-2 subfamily.

It localises to the cytoplasm. Functionally, catalyzes the GTP-dependent ribosomal translocation step during translation elongation. During this step, the ribosome changes from the pre-translocational (PRE) to the post-translocational (POST) state as the newly formed A-site-bound peptidyl-tRNA and P-site-bound deacylated tRNA move to the P and E sites, respectively. Catalyzes the coordinated movement of the two tRNA molecules, the mRNA and conformational changes in the ribosome. This Helicobacter pylori (strain P12) protein is Elongation factor G.